The chain runs to 394 residues: Bifunctional enzyme Fae/Hps (394 aa).

The formaldehyde-activating enzyme stretch occupies residues 1-162; that stretch reads MEFRIGEALI…YEKDRSFHPF (162 aa). H18 functions as the Proton donor in the catalytic mechanism. D20, L49, K67, T69, and Q84 together coordinate substrate. Positions 163 to 394 are 3-hexulose-6-phosphate synthase; sequence VGRKLTKLWD…TDQFRIMTDF (232 aa).

The protein in the N-terminal section; belongs to the formaldehyde-activating enzyme family. This sequence in the C-terminal section; belongs to the HPS/KGPDC family. HPS subfamily.

The catalysed reaction is 5,6,7,8-tetrahydromethanopterin + formaldehyde = 5,10-methylenetetrahydromethanopterin + H2O. The enzyme catalyses D-ribulose 5-phosphate + formaldehyde = D-arabino-hex-3-ulose 6-phosphate. It participates in carbohydrate biosynthesis; D-ribose 5-phosphate biosynthesis. Catalyzes the condensation of formaldehyde with tetrahydromethanopterin (H(4)MPT) to 5,10-methylenetetrahydromethanopterin. Functionally, catalyzes the reversible formation of ribulose-5-phosphate and formaldehyde from 3-hexulose-6-phosphate. The polypeptide is Bifunctional enzyme Fae/Hps (Archaeoglobus fulgidus (strain ATCC 49558 / DSM 4304 / JCM 9628 / NBRC 100126 / VC-16)).